We begin with the raw amino-acid sequence, 358 residues long: DnaJ homolog subfamily B member 11 (358 aa).

The first 22 residues, 1–22, serve as a signal peptide directing secretion; the sequence is MAPQNLSTFCLLLLYLIGAVIA. The region spanning 25–90 is the J domain; that stretch reads DFYKILGVPR…EKRKQYDTYG (66 aa). Thr-188 carries the phosphothreonine modification. Asn-261 carries N-linked (GlcNAc...) asparagine glycosylation.

In terms of assembly, part of a large chaperone multiprotein complex comprising DNAJB11, HSP90B1, HSPA5, HYOU, PDIA2, PDIA4, PDIA6, PPIB, SDF2L1, UGGT1 and very small amounts of ERP29, but not, or at very low levels, CALR nor CANX. Binds to denatured substrates in an ATP-independent manner. Interacts via the J domain with HSPA5 in an ATP-dependent manner. Post-translationally, contains high-mannose Endo H-sensitive carbohydrates. Cys-169, Cys-171, Cys-193 and Cys-196 form intramolecular disulfide bonds. The preferential partner for each Cys is not known. In terms of processing, thr-188 was reported to be phosphorylated upon DNA damage by ATM or ATR; however as this position has been shown to be in the ER lumen, the in vivo relevance is not proven. As to expression, widely expressed.

The protein localises to the endoplasmic reticulum lumen. Its function is as follows. As a co-chaperone for HSPA5 it is required for proper folding, trafficking or degradation of proteins. Binds directly to both unfolded proteins that are substrates for ERAD and nascent unfolded peptide chains, but dissociates from the HSPA5-unfolded protein complex before folding is completed. May help recruiting HSPA5 and other chaperones to the substrate. Stimulates HSPA5 ATPase activity. It is necessary for maturation and correct trafficking of PKD1. This Homo sapiens (Human) protein is DnaJ homolog subfamily B member 11 (DNAJB11).